The following is a 430-amino-acid chain: Adenylosuccinate synthetase (430 aa).

GTP is bound by residues 12-18 (GDEGKGK) and 40-42 (GHT). Catalysis depends on Asp-13, which acts as the Proton acceptor. Residues Asp-13 and Gly-40 each contribute to the Mg(2+) site. IMP-binding positions include 13–16 (DEGK), 38–41 (NAGH), Thr-130, Arg-144, Gln-224, Thr-239, and Arg-303. His-41 serves as the catalytic Proton donor. Position 299-305 (299-305 (VVTGRKR)) interacts with substrate. GTP is bound by residues Arg-305, 331 to 333 (KLD), and 413 to 415 (STS).

The protein belongs to the adenylosuccinate synthetase family. In terms of assembly, homodimer. It depends on Mg(2+) as a cofactor.

The protein localises to the cytoplasm. The catalysed reaction is IMP + L-aspartate + GTP = N(6)-(1,2-dicarboxyethyl)-AMP + GDP + phosphate + 2 H(+). Its pathway is purine metabolism; AMP biosynthesis via de novo pathway; AMP from IMP: step 1/2. Functionally, plays an important role in the de novo pathway of purine nucleotide biosynthesis. Catalyzes the first committed step in the biosynthesis of AMP from IMP. This is Adenylosuccinate synthetase from Methylobacterium sp. (strain 4-46).